A 77-amino-acid polypeptide reads, in one-letter code: Acyl carrier protein (77 aa).

Residues 2–77 enclose the Carrier domain; that stretch reads ADVLERVTKI…DAVNYIKSRL (76 aa). At Ser-37 the chain carries O-(pantetheine 4'-phosphoryl)serine.

It belongs to the acyl carrier protein (ACP) family. 4'-phosphopantetheine is transferred from CoA to a specific serine of apo-ACP by AcpS. This modification is essential for activity because fatty acids are bound in thioester linkage to the sulfhydryl of the prosthetic group.

Its subcellular location is the cytoplasm. It functions in the pathway lipid metabolism; fatty acid biosynthesis. Its function is as follows. Carrier of the growing fatty acid chain in fatty acid biosynthesis. This is Acyl carrier protein from Geobacillus kaustophilus (strain HTA426).